The following is a 281-amino-acid chain: MAFHMATRYAHSPEDIKHFDTTKLRQEFLMEKIFNAGDILLTYTYNDRMIFGGVVPTESSLEIKLSKELGVDFFLQCRELGVINIGGPGSIIVDGDKAAMVKQDGYYIGMGTKQVVFASDNPANPAKFYVVSTPAHKTYPNKKLPFANALAKPMGDQQHLNKRTIYKYIDASQMATCQLQMGYTVLEPGSSWNTMPAHTHARRMETYMYFDFAEPDTRVLHLLGESTETRHIALFNEQAVVNPSWSIHCGVGTTNYAFIWAMCGENQTYDDMDQVPMNELR.

4 residues coordinate Zn(2+): His-198, His-200, Glu-205, and His-248.

The protein belongs to the KduI family. The cofactor is Zn(2+).

The catalysed reaction is 5-dehydro-4-deoxy-D-glucuronate = 3-deoxy-D-glycero-2,5-hexodiulosonate. It functions in the pathway glycan metabolism; pectin degradation; 2-dehydro-3-deoxy-D-gluconate from pectin: step 4/5. Its function is as follows. Catalyzes the isomerization of 5-dehydro-4-deoxy-D-glucuronate to 3-deoxy-D-glycero-2,5-hexodiulosonate. This is 4-deoxy-L-threo-5-hexosulose-uronate ketol-isomerase from Lacticaseibacillus casei (strain BL23) (Lactobacillus casei).